The primary structure comprises 497 residues: Glutamyl-tRNA reductase (497 aa).

Substrate-binding positions include 58-61, Ser118, 123-125, and Gln129; these read TCNR and EQQ. The active-site Nucleophile is the Cys59. 214–219 contacts NADP(+); it reads GAGAMA. Residues 461-477 are compositionally biased toward polar residues; sequence VTQPGQADSSAAQTAGT. The interval 461-486 is disordered; sequence VTQPGQADSSAAQTAGTSARADQIPS.

This sequence belongs to the glutamyl-tRNA reductase family. In terms of assembly, homodimer.

It catalyses the reaction (S)-4-amino-5-oxopentanoate + tRNA(Glu) + NADP(+) = L-glutamyl-tRNA(Glu) + NADPH + H(+). It functions in the pathway porphyrin-containing compound metabolism; protoporphyrin-IX biosynthesis; 5-aminolevulinate from L-glutamyl-tRNA(Glu): step 1/2. Functionally, catalyzes the NADPH-dependent reduction of glutamyl-tRNA(Glu) to glutamate 1-semialdehyde (GSA). The sequence is that of Glutamyl-tRNA reductase from Corynebacterium jeikeium (strain K411).